The following is a 124-amino-acid chain: uncharacterized protein (124 aa).

A signal peptide spans 1 to 23 (MHKLLKLLSITLIGLSVATGVQA).

Belongs to the cytochrome b562 family.

This is an uncharacterized protein from Pasteurella multocida (strain Pm70).